The chain runs to 165 residues: Transcription antitermination protein NusB (165 aa).

It belongs to the NusB family.

Functionally, involved in transcription antitermination. Required for transcription of ribosomal RNA (rRNA) genes. Binds specifically to the boxA antiterminator sequence of the ribosomal RNA (rrn) operons. The protein is Transcription antitermination protein NusB of Rhodococcus erythropolis (strain PR4 / NBRC 100887).